Here is a 189-residue protein sequence, read N- to C-terminus: DnaJ homolog subfamily C member 5G (189 aa).

A J domain is found at 17-98 (SLYAVLDLKK…KKRKIYDQHG (82 aa)). Residues 154 to 189 (PEQDSGRKYQQNVQSQPPRSGAKCDFRSEENSEDDF) form a disordered region. Residues 161-171 (KYQQNVQSQPP) are compositionally biased toward polar residues.

Post-translationally, palmitoylated. Testis specific.

It localises to the membrane. In Homo sapiens (Human), this protein is DnaJ homolog subfamily C member 5G (DNAJC5G).